The primary structure comprises 169 residues: Large ribosomal subunit protein uL10 (169 aa).

The protein belongs to the universal ribosomal protein uL10 family. Part of the ribosomal stalk of the 50S ribosomal subunit. The N-terminus interacts with L11 and the large rRNA to form the base of the stalk. The C-terminus forms an elongated spine to which L12 dimers bind in a sequential fashion forming a multimeric L10(L12)X complex.

Functionally, forms part of the ribosomal stalk, playing a central role in the interaction of the ribosome with GTP-bound translation factors. The chain is Large ribosomal subunit protein uL10 from Orientia tsutsugamushi (strain Boryong) (Rickettsia tsutsugamushi).